The sequence spans 155 residues: Deoxyuridine 5'-triphosphate nucleotidohydrolase (155 aa).

Substrate is bound by residues 74 to 76 (RSG), Asn87, and 91 to 93 (LID).

The protein belongs to the dUTPase family. The cofactor is Mg(2+).

It carries out the reaction dUTP + H2O = dUMP + diphosphate + H(+). Its pathway is pyrimidine metabolism; dUMP biosynthesis; dUMP from dCTP (dUTP route): step 2/2. In terms of biological role, this enzyme is involved in nucleotide metabolism: it produces dUMP, the immediate precursor of thymidine nucleotides and it decreases the intracellular concentration of dUTP so that uracil cannot be incorporated into DNA. This is Deoxyuridine 5'-triphosphate nucleotidohydrolase from Xanthomonas axonopodis pv. citri (strain 306).